The following is a 298-amino-acid chain: Esterase Rv0045c (298 aa).

S122 acts as the Nucleophile in catalysis. Residues D146 and H277 contribute to the active site.

Belongs to the AB hydrolase superfamily. Monomer.

It catalyses the reaction a carboxylic ester + H2O = an alcohol + a carboxylate + H(+). The enzyme catalyses a butanoate ester + H2O = an aliphatic alcohol + butanoate + H(+). It carries out the reaction an acetyl ester + H2O = an aliphatic alcohol + acetate + H(+). The catalysed reaction is a hexanoate ester + H2O = an aliphatic alcohol + hexanoate + H(+). It catalyses the reaction a tetradecanoate ester + H2O = an aliphatic alcohol + tetradecanoate + H(+). Hydrolysis of a fluorogenic ester substrate (MOAME) is allosterically inhibited by divalent transition metal cations (Cu(2+), Zn(2+), Ni(2+) and Co(2+)). Inhibition is largely due to a two order of magnitude drop in kcat, with relatively little change in KM. The thermal stability decreases with increasing concentrations of Ni(2+). Its function is as follows. Esterase likely involved in ester/lipid metabolism. Shows strong substrate selectivity toward short, straight chain alkyl esters with the highest activity toward four atom chains. The physiological substrate is unknown. Is able to hydrolyze ester bonds within a wide range of p-nitrophenyl derivatives (C2-C14) in vitro. The sequence is that of Esterase Rv0045c from Mycobacterium tuberculosis (strain ATCC 25618 / H37Rv).